We begin with the raw amino-acid sequence, 376 residues long: Polar flagellin A (376 aa).

Coiled coils occupy residues 103 to 128 and 310 to 338; these read SNSK…RIAE and FQNR…IKDT.

It belongs to the bacterial flagellin family. Heteromer of multiple flagellin subunits including FlaA, FlaB/D, FlaC, FlaE and FlaF.

Its subcellular location is the secreted. It is found in the bacterial flagellum. In terms of biological role, flagellin is the subunit protein which polymerizes to form the filaments of bacterial flagella. FlaA is not essential for polar flagellar synthesis and swimming motility. Homomer of FlaA is able to form a functional filament. The sequence is that of Polar flagellin A (flaA) from Vibrio parahaemolyticus serotype O3:K6 (strain RIMD 2210633).